Consider the following 314-residue polypeptide: Epithelial-stromal interaction protein 1 (314 aa).

Disordered regions lie at residues 1–72 (MYTR…PNES), 227–272 (WAGS…RAQI), and 289–314 (QGKS…SWGL). A compositionally biased stretch (basic and acidic residues) spans 18 to 30 (SRDHAGAGQRREL). Position 39 is a phosphoserine (Ser-39). Positions 71–180 (ESRRQKIQRI…QEDIRRATFR (110 aa)) form a coiled coil. The segment covering 232 to 272 (AHRDSPQKEDNPRLQKTRDGHQKNKLLETKGQHQEEERAQI) has biased composition (basic and acidic residues). Positions 305–314 (NMNSTDSWGL) are enriched in polar residues.

As to expression, expressed in the spleen, with expression in T cells, B cells, natural killer cells and natural killer T cells and high expression in monocytes and macrophages.

Functionally, plays a role in M1 macrophage polarization and is required for the proper regulation of gene expression during M1 versus M2 macrophage differentiation. Might play a role in RELA/p65 and STAT1 phosphorylation and nuclear localization upon activation of macrophages. This is Epithelial-stromal interaction protein 1 (Epsti1) from Mus musculus (Mouse).